We begin with the raw amino-acid sequence, 36 residues long: MQAEVLDFFEDRGETPPGRSSEAGYGLFWRVGVVWV.

This is an uncharacterized protein from Treponema pallidum (strain Nichols).